Reading from the N-terminus, the 504-residue chain is Serum response factor (504 aa).

Residues 1–28 show a composition bias toward low complexity; it reads MLPSQAGAAAALGRGSALGGNLNRTPTG. The disordered stretch occupies residues 1-94; it reads MLPSQAGAAA…EELGAERRGL (94 aa). The span at 29–51 shows a compositional bias: gly residues; the sequence is RPGGGGGTRGANGGRVPGNGAGL. Over residues 61 to 76 the composition is skewed to low complexity; the sequence is AAAAAPTAGALYSGSE. 5 positions are modified to phosphoserine: serine 73, serine 75, serine 79, serine 81, and serine 99. Residues 77-87 show a composition bias toward acidic residues; the sequence is GDSESGEEEEL. The DNA-binding element occupies 129 to 218; that stretch reads GAKPGKKTRG…ALIQTCLNSP (90 aa). An MADS-box domain is found at 137–197; that stretch reads RGRVKIKMEF…GHVYTFATRK (61 aa). The involved in dimerization stretch occupies residues 164-218; that stretch reads IMKKAYELSTLTGTQVLLLVASETGHVYTFATRKLQPMITSETGKALIQTCLNSP. The interval 215 to 288 is disordered; sequence LNSPDSPPRS…PSTSTTMQVS (74 aa). 2 positions are modified to phosphoserine: serine 220 and serine 249. Polar residues predominate over residues 264–288; the sequence is TVTNLPGTTSTIQTAPSTSTTMQVS. O-linked (GlcNAc) serine glycosylation is found at serine 273, serine 303, serine 305, serine 312, and serine 379. Residues 359–381 are disordered; that stretch reads HQAPQQASPSRDSSTDLTQTSSS. The segment covering 368-381 has biased composition (low complexity); sequence SRDSSTDLTQTSSS. A phosphoserine; by dsDNA kinase mark is found at serine 431 and serine 442.

Binds DNA as a multimer, probably a dimer. Interacts with MRTFA, forming the SRF-MRTFA nuclear complex which binds the 5'-CArG-3' consensus motif (CArG box) on DNA via SRF. Forms a nuclear ternary complex with MRTFA and SCAI. Interacts with MRTFB. Interacts with MLLT7/FOXO4, NKX3A and SSRP1. Interacts with ARID2. Interacts with SRFBP1. Interacts with FOXK1. Interacts with LPXN. Interacts with OLFM2; the interaction promotes dissociation of SRF from the transcriptional repressor HEY2, facilitates binding of SRF to target genes and promotes smooth muscle differentiation. Interacts with NKX3-1. Interacts with KAT5. Interacts with PURB. In terms of processing, phosphorylated by PRKDC.

The protein localises to the nucleus. Functionally, SRF is a transcription factor that binds to the serum response element (SRE), a short sequence of dyad symmetry located 300 bp to the 5' of the site of transcription initiation of some genes (such as FOS). Together with MRTFA transcription coactivator, controls expression of genes regulating the cytoskeleton during development, morphogenesis and cell migration. The SRF-MRTFA complex activity responds to Rho GTPase-induced changes in cellular globular actin (G-actin) concentration, thereby coupling cytoskeletal gene expression to cytoskeletal dynamics. Required for cardiac differentiation and maturation. The protein is Serum response factor (Srf) of Mus musculus (Mouse).